We begin with the raw amino-acid sequence, 451 residues long: F-box/LRR-repeat protein 13 (451 aa).

The region spanning 17 to 70 (VDWISKLPDCLLCEVLLNLPTKDVVKTSVLSRRWRNLWKHVPGLDLDNTDFQEF) is the F-box domain. LRR repeat units follow at residues 128 to 155 (DDSY…KLCG), 177 to 202 (TKFA…TIER), 224 to 251 (VADS…RLSD), and 335 to 363 (CVEF…VVKS). Residues 370-421 (GENIILPGPRRFLSSLEYVKIERPLKGEAMEMKLVSYLLENSTILKKLTLCL) form the FBD domain.

This Arabidopsis thaliana (Mouse-ear cress) protein is F-box/LRR-repeat protein 13 (FBL13).